A 484-amino-acid polypeptide reads, in one-letter code: Probable glycine dehydrogenase (decarboxylating) subunit 2 (484 aa).

An N6-(pyridoxal phosphate)lysine modification is found at K264.

The protein belongs to the GcvP family. C-terminal subunit subfamily. In terms of assembly, the glycine cleavage system is composed of four proteins: P, T, L and H. In this organism, the P 'protein' is a heterodimer of two subunits. Requires pyridoxal 5'-phosphate as cofactor.

It carries out the reaction N(6)-[(R)-lipoyl]-L-lysyl-[glycine-cleavage complex H protein] + glycine + H(+) = N(6)-[(R)-S(8)-aminomethyldihydrolipoyl]-L-lysyl-[glycine-cleavage complex H protein] + CO2. Its function is as follows. The glycine cleavage system catalyzes the degradation of glycine. The P protein binds the alpha-amino group of glycine through its pyridoxal phosphate cofactor; CO(2) is released and the remaining methylamine moiety is then transferred to the lipoamide cofactor of the H protein. This is Probable glycine dehydrogenase (decarboxylating) subunit 2 from Legionella pneumophila (strain Lens).